The chain runs to 77 residues: U8-lycotoxin-Ls1e (77 aa).

The first 20 residues, Met-1–Ala-20, serve as a signal peptide directing secretion. Positions Gln-21–Lys-26 are excised as a propeptide.

It belongs to the neurotoxin 19 (CSTX) family. 08 (U8-Lctx) subfamily. Post-translationally, contains 4 disulfide bonds. As to expression, expressed by the venom gland.

The protein resides in the secreted. This Lycosa singoriensis (Wolf spider) protein is U8-lycotoxin-Ls1e.